Consider the following 283-residue polypeptide: Thymidylate synthase (283 aa).

Arg-22 lines the dUMP pocket. Cys-160 serves as the catalytic Nucleophile. DUMP contacts are provided by residues Arg-180–Asp-183, Asn-191, and His-221–Tyr-223. Asp-183 provides a ligand contact to (6R)-5,10-methylene-5,6,7,8-tetrahydrofolate. Ser-282 is a binding site for (6R)-5,10-methylene-5,6,7,8-tetrahydrofolate.

The protein belongs to the thymidylate synthase family. Bacterial-type ThyA subfamily. Homodimer.

Its subcellular location is the cytoplasm. It catalyses the reaction dUMP + (6R)-5,10-methylene-5,6,7,8-tetrahydrofolate = 7,8-dihydrofolate + dTMP. It functions in the pathway pyrimidine metabolism; dTTP biosynthesis. In terms of biological role, catalyzes the reductive methylation of 2'-deoxyuridine-5'-monophosphate (dUMP) to 2'-deoxythymidine-5'-monophosphate (dTMP) while utilizing 5,10-methylenetetrahydrofolate (mTHF) as the methyl donor and reductant in the reaction, yielding dihydrofolate (DHF) as a by-product. This enzymatic reaction provides an intracellular de novo source of dTMP, an essential precursor for DNA biosynthesis. The polypeptide is Thymidylate synthase (Haemophilus influenzae (strain 86-028NP)).